Consider the following 230-residue polypeptide: Chalcone--flavanone isomerase (230 aa).

Thr52, Asn117, and Ser194 together coordinate substrate.

It belongs to the chalcone isomerase family.

The enzyme catalyses a chalcone = a flavanone.. It functions in the pathway secondary metabolite biosynthesis; flavonoid biosynthesis. Catalyzes the intramolecular cyclization of bicyclic chalcones into tricyclic (S)-flavanones. Responsible for the isomerization of 4,2',4',6'-tetrahydroxychalcone (also termed chalcone) into naringenin. The sequence is that of Chalcone--flavanone isomerase (CHI) from Camellia sinensis (Tea plant).